Reading from the N-terminus, the 362-residue chain is Probable tocopherol O-methyltransferase, chloroplastic (362 aa).

The transit peptide at 1 to 55 directs the protein to the chloroplast; it reads MAHAAAATGALAPLHPLLRCTSRHLCASASPRAGLCLHHHRRRRRSSRRTKLAVR. Positions 141–150 are SAM motif I; the sequence is VVDVGCGIGG. The segment at 204–212 is SAM motif II; the sequence is GQFDLVWSM. The SAM motif III stretch occupies residues 231 to 240; that stretch reads VAAPGARIII.

It belongs to the class I-like SAM-binding methyltransferase superfamily. gTMT family.

The protein localises to the plastid. Its subcellular location is the chloroplast. It catalyses the reaction gamma-tocopherol + S-adenosyl-L-methionine = (+)-alpha-tocopherol + S-adenosyl-L-homocysteine + H(+). It carries out the reaction delta-tocotrienol + S-adenosyl-L-methionine = beta-tocotrienol + S-adenosyl-L-homocysteine + H(+). The enzyme catalyses gamma-tocotrienol + S-adenosyl-L-methionine = alpha-tocotrienol + S-adenosyl-L-homocysteine + H(+). The catalysed reaction is delta-tocopherol + S-adenosyl-L-methionine = beta-tocopherol + S-adenosyl-L-homocysteine + H(+). It functions in the pathway cofactor biosynthesis; tocopherol biosynthesis. Involved in the synthesis of tocopherol (vitamin E). Methylates gamma- and delta-tocopherol to form beta- and alpha-tocopherol, respectively. This is Probable tocopherol O-methyltransferase, chloroplastic (VTE4) from Oryza sativa subsp. japonica (Rice).